A 189-amino-acid polypeptide reads, in one-letter code: Glycerol-3-phosphate acyltransferase (189 aa).

The next 5 membrane-spanning stretches (helical) occupy residues 1-21 (MFWL…AILL), 51-71 (LAIL…LIAS), 77-97 (LQDQ…PLYF), 111-131 (MLLG…LLTF), and 151-171 (LLAW…LLIV).

The protein belongs to the PlsY family. Probably interacts with PlsX.

The protein localises to the cell inner membrane. The catalysed reaction is an acyl phosphate + sn-glycerol 3-phosphate = a 1-acyl-sn-glycero-3-phosphate + phosphate. Its pathway is lipid metabolism; phospholipid metabolism. In terms of biological role, catalyzes the transfer of an acyl group from acyl-phosphate (acyl-PO(4)) to glycerol-3-phosphate (G3P) to form lysophosphatidic acid (LPA). This enzyme utilizes acyl-phosphate as fatty acyl donor, but not acyl-CoA or acyl-ACP. The protein is Glycerol-3-phosphate acyltransferase of Pseudomonas fluorescens (strain Pf0-1).